A 213-amino-acid chain; its full sequence is MDTIWDISPPIAPATPVWPGDTPVGIERVWRIEAGSPVNVARITLSPHTGAHADAPLHYDAHGAPIGAVPLDAYLGRCRVIHCIGAHPVVSPDDVRAALADAPPRVLLRTYGQAPQRAWDSAFCAVAPQTIDLLAAHGVRLVGIDTPSLDPQESKTMDAHRRIRAHGMAILEGLVLDEIAAGDYELIALPLKFATLDASPVRAVLRALPDAPR.

Trp18 contributes to the substrate binding site. The Zn(2+) site is built by His48, His52, and Asp54. The active-site Proton donor/acceptor is the His58. Residues His160 and Glu172 each coordinate Zn(2+).

It belongs to the Cyclase 1 superfamily. KynB family. In terms of assembly, homodimer. Zn(2+) serves as cofactor.

It catalyses the reaction N-formyl-L-kynurenine + H2O = L-kynurenine + formate + H(+). It functions in the pathway amino-acid degradation; L-tryptophan degradation via kynurenine pathway; L-kynurenine from L-tryptophan: step 2/2. Its function is as follows. Catalyzes the hydrolysis of N-formyl-L-kynurenine to L-kynurenine, the second step in the kynurenine pathway of tryptophan degradation. The polypeptide is Kynurenine formamidase (Burkholderia thailandensis (strain ATCC 700388 / DSM 13276 / CCUG 48851 / CIP 106301 / E264)).